The sequence spans 256 residues: Putative ankyrin repeat protein PAE1861 (256 aa).

ANK repeat units follow at residues 1–30 (MDCN…SPDV), 34–63 (YGRT…DPNA), 67–92 (EGKT…ASAV), 93–122 (GVEE…RPGA), 124–151 (HGES…DPNA), 155–184 (HGKT…DVNV), 188–214 (AGRT…DLNA), and 218–245 (MGRT…PVPD).

The sequence is that of Putative ankyrin repeat protein PAE1861 from Pyrobaculum aerophilum (strain ATCC 51768 / DSM 7523 / JCM 9630 / CIP 104966 / NBRC 100827 / IM2).